A 358-amino-acid polypeptide reads, in one-letter code: Alanine racemase (358 aa).

K34 functions as the Proton acceptor; specific for D-alanine in the catalytic mechanism. An N6-(pyridoxal phosphate)lysine modification is found at K34. Substrate is bound at residue R129. Y254 functions as the Proton acceptor; specific for L-alanine in the catalytic mechanism. M302 is a substrate binding site.

Belongs to the alanine racemase family. It depends on pyridoxal 5'-phosphate as a cofactor.

The enzyme catalyses L-alanine = D-alanine. Its pathway is amino-acid biosynthesis; D-alanine biosynthesis; D-alanine from L-alanine: step 1/1. Its function is as follows. Catalyzes the interconversion of L-alanine and D-alanine. May also act on other amino acids. The chain is Alanine racemase (alr) from Vibrio vulnificus (strain CMCP6).